Here is a 462-residue protein sequence, read N- to C-terminus: MLDFAIFAVTFLLALVGAVLYLYPASRQAAGIPGITPTEEKDGNLPDIVNSGSLHEFLVNLHERYGPVVSFWFGRRLVVSLGTVDVLKQHINPNKTSDPFETMLKSLLRYQSGGGSVSENHMRKKLYENGVTDSLKSNFALLLKLSEELLDKWLSYPETQHVPLSQHMLGFAMKSVTQMVMGSTFEDDQEVIRFQKNHGTVWSEIGKGFLDGSLDKNMTRKKQYEDALMQLESVLRNIIKERKGRNFSQHIFIDSLVQGNLNDQQILEDSMIFSLASCIITAKLCTWAICFLTTSEEVQKKLYEEINQVFGNGPVTPEKIEQLRYCQHVLCETVRTAKLTPVSAQLQDIEGKIDRFIIPRETLVLYALGVVLQDPNTWPSPHKFDPDRFDDELVMKTFSSLGFSGTQECPELRFAYMVTTVLLSVLVKRLHLLSVEGQVIETKYELVTSSREEAWITVSKRY.

Residues 4-24 traverse the membrane as a helical segment; it reads FAIFAVTFLLALVGAVLYLYP. Cys-409 serves as a coordination point for heme.

This sequence belongs to the cytochrome P450 family. It depends on heme as a cofactor.

The protein localises to the membrane. The polypeptide is Cytochrome P450 20A1 (CYP20A1) (Homo sapiens (Human)).